The chain runs to 367 residues: E3 ubiquitin-protein ligase RGLG3 (367 aa).

The region spanning 37–257 (NLILGIDFTK…KEAAFALAAL (221 aa)) is the VWFA domain. The RING-type zinc-finger motif lies at 323–356 (CPICLTNPKDMAFSCGHTTCKECGVVITTCPLCR).

As to quaternary structure, interacts with UBC30, GRXS17 and GLB3. Binds to and coactivates GAF1/IDD2 and ENY/IDD1. Widely expressed.

The protein localises to the cytoplasm. It localises to the nucleus. The enzyme catalyses S-ubiquitinyl-[E2 ubiquitin-conjugating enzyme]-L-cysteine + [acceptor protein]-L-lysine = [E2 ubiquitin-conjugating enzyme]-L-cysteine + N(6)-ubiquitinyl-[acceptor protein]-L-lysine.. Possesses E3 ubiquitin-protein ligase in vitro. Acts as upstream modulator of jasmonate (JA) signaling in response to various stimuli, such as JA-inhibited root growth, JA-inductive gene expression, coronatine-mediated pathogen susceptibility, wound-stimulated expression of JA-responsive genes and wound-induced JA biosynthesis. Controls fumonisin B1 (FB1)-triggered programmed cell death (PCD) by modulating the JA signaling pathway. May mediate salicylic acid (SA) suppression of JA signaling in FB1-induced responses. May mediate the formation of 'Lys-48'-linked multiubiquitin chains. Mediates the polyubiquitination and subsequent proteasomal degradation of the target protein GRXS17. The polypeptide is E3 ubiquitin-protein ligase RGLG3 (Arabidopsis thaliana (Mouse-ear cress)).